Here is a 297-residue protein sequence, read N- to C-terminus: Homoserine kinase (297 aa).

An ATP-binding site is contributed by P79–A89.

It belongs to the GHMP kinase family. Homoserine kinase subfamily.

It localises to the cytoplasm. It catalyses the reaction L-homoserine + ATP = O-phospho-L-homoserine + ADP + H(+). Its pathway is amino-acid biosynthesis; L-threonine biosynthesis; L-threonine from L-aspartate: step 4/5. Functionally, catalyzes the ATP-dependent phosphorylation of L-homoserine to L-homoserine phosphate. This chain is Homoserine kinase, found in Pyrobaculum neutrophilum (strain DSM 2338 / JCM 9278 / NBRC 100436 / V24Sta) (Thermoproteus neutrophilus).